The chain runs to 433 residues: Histidinol dehydrogenase homolog (433 aa).

Gln-249 and His-252 together coordinate Zn(2+). Catalysis depends on proton acceptor residues Glu-319 and His-320. The Zn(2+) site is built by Asp-353 and His-412.

It belongs to the histidinol dehydrogenase family. It depends on Zn(2+) as a cofactor.

This is Histidinol dehydrogenase homolog from Ruegeria pomeroyi (strain ATCC 700808 / DSM 15171 / DSS-3) (Silicibacter pomeroyi).